We begin with the raw amino-acid sequence, 727 residues long: MAPPAKRARRGLVPPGYKYLGPGNSLDQGEPTNPSDAAAKEHDEAYAAYLRSGKNPYLYFSPADQRFIDQTKDAKDWGGKIGHYFFRAKKAIAPVLTDTPDHPSTSRPTKPTKRSKPPPHIFINLAKKKKAGAGQVKRDNLAPMSDGAVQPDGGQPAVRNERATGSGNGSGGGGGGGSGGVGISTGTFNNQTEFKFLENGWVEITANSSRLVHLNMPESENYKRVVVNNMDKTAVKGNMALDDIHVQIVTPWSLVDANAWGVWFNPGDWQLIVNTMSELHLVSFEQEIFNVVLKTVSESATQPPTKVYNNDLTASLMVALDSNNTMPFTPAAMRSETLGFYPWKPTIPTPWRYYFQWDRTLIPSHTGTSGTPTNVYHGTDPDDVQFYTIENSVPVHLLRTGDEFATGTFFFDCKPCRLTHTWQTNRALGLPPFLNSLPQSEGATNFGDIGVQQDKRRGVTQMGNTDYITEATIMRPAEVGYSAPYYSFEASTQGPFKTPIAAGRGGAQTDENQAADGDPRYAFGRQHGQKTTTTGETPERFTYIAHQDTGRYPEGDWIQNINFNLPVTNDNVLLPTDPIGGKTGINYTNIFNTYGPLTALNNVPPVYPNGQIWDKEFDTDLKPRLHVNAPFVCQNNCPGQLFVKVAPNLTNEYDPDASANMSRIVTYSDFWWKGKLVFKAKLRASHTWNPIQQMSINVDNQFNYVPNNIGAMKIVYEKSQLAPRKLY.

The segment covering 1–10 (MAPPAKRARR) has biased composition (basic residues). Disordered stretches follow at residues 1–38 (MAPP…SDAA), 95–120 (VLTD…PPPH), and 141–184 (LAPM…VGIS). A Nuclear localization signal motif is present at residues 4–13 (PAKRARRGLV). A phospholipase A2-like region spans residues 19–64 (YLGPGNSLDQGEPTNPSDAAAKEHDEAYAAYLRSGKNPYLYFSPAD). The segment covering 25–35 (SLDQGEPTNPS) has biased composition (polar residues). A compositionally biased stretch (gly residues) spans 166 to 183 (SGNGSGGGGGGGSGGVGI). Asn-323 contributes to the Mg(2+) binding site. A disulfide bridge connects residues Cys-633 and Cys-637.

This sequence belongs to the parvoviridae capsid protein family. In terms of assembly, interacts with host TFRC.

The protein localises to the virion. It is found in the host nucleus. Capsid protein self-assembles to form an icosahedral capsid with a T=1 symmetry, about 22 nm in diameter, and consisting of 60 copies of two size variants of the capsid proteins, VP1 and VP2, which differ by the presence of an N-terminal extension in the minor protein VP1. The capsid encapsulates the genomic ssDNA. Capsid proteins are responsible for the attachment to host cell receptors. This attachment induces virion internalization predominantly through clathrin-dependent endocytosis. Binding to the host receptors also induces capsid rearrangements leading to surface exposure of VP1 N-terminus, specifically its phospholipase A2-like region and putative nuclear localization signal(s). VP1 N-terminus might serve as a lipolytic enzyme to breach the endosomal membrane during entry into host cell and might contribute to virus transport to the nucleus. The protein is Capsid protein VP1 of Feline panleukopenia virus (strain 193) (FPV).